The primary structure comprises 252 residues: NADH-quinone oxidoreductase subunit E (252 aa).

Cys114, Cys119, Cys155, and Cys159 together coordinate [2Fe-2S] cluster. Residues 211 to 252 (LAGLPDQRPDEGQGGPGAPTLAGLQVARKNDMQAPPTPGADE) are disordered.

The protein belongs to the complex I 24 kDa subunit family. The cofactor is [2Fe-2S] cluster.

It carries out the reaction a quinone + NADH + 5 H(+)(in) = a quinol + NAD(+) + 4 H(+)(out). Functionally, NDH-1 shuttles electrons from NADH, via FMN and iron-sulfur (Fe-S) centers, to quinones in the respiratory chain. The immediate electron acceptor for the enzyme in this species is believed to be menaquinone. Couples the redox reaction to proton translocation (for every two electrons transferred, four hydrogen ions are translocated across the cytoplasmic membrane), and thus conserves the redox energy in a proton gradient. This is NADH-quinone oxidoreductase subunit E (nuoE) from Mycobacterium bovis (strain ATCC BAA-935 / AF2122/97).